Reading from the N-terminus, the 404-residue chain is Caspase b (404 aa).

A propeptide spanning residues 1–171 is cleaved from the precursor; sequence MEDITQLLSD…DIYTPRSGTQ (171 aa). The region spanning 8 to 80 is the Pyrin domain; sequence LSDVLEDLVE…LRKIKQNERA (73 aa). Catalysis depends on residues His-249 and Cys-296. A propeptide spanning residues 301–316 is cleaved from the precursor; that stretch reads SSGVLAQDSVFASDSW.

It belongs to the peptidase C14A family. As to quaternary structure, upon direct LPS-binding, forms large homooligomers, resulting in its activation. These oligomers are often referred to as 'non-canonical inflammasomes'. Heterotetramer that consists of two anti-parallel arranged heterodimers, each one formed by a 20 kDa (p20) and a 10 kDa (p10) subunit. Interacts with caspa. Interacts with pycard; the interaction only occurs in the presence of nlrp1. Component of NLRP1 inflammasomes. Inflammasomes are supramolecular complexes that assemble in the cytosol in response to pathogens and other damage-associated signals and play critical roles in innate immunity and inflammation. The NLRP1 inflammasome is composed of the signal sensor nlrp1, and the adapter pycard (asc), which recruit effector pro-inflammatory caspases caspa and/or caspb. The interaction between nlrp1 and pycard is required for the sequential recruitment of caspa and then caspb. Caspa is preferentially recruited first and this causes the cleavage of pro-il1b into the midformed il1b. This is followed by the recruitment of caspb, which is activated and cleaves the midformed il1b resulting in il1b maturation. The two subunits are derived from the precursor sequence by an autocatalytic mechanism. Expressed in the spleen, kidney and liver, and highly expressed in the gills and gut.

It is found in the inflammasome. Its subcellular location is the cytoplasm. It carries out the reaction Strict requirement for Asp at the P1 position. It has a preferred cleavage sequence of Tyr-Val-Ala-Asp-|- but also cleaves at Asp-Glu-Val-Asp-|-.. Its activity is regulated as follows. Activated by homooligomerization induced by direct binding to cytosolic LPS. Functionally, thiol protease which cleaves IL-1 beta (il1b), releasing the mature cytokine which is involved in a variety of inflammatory processes, and mediates apoptosis. Component of the NLRP1 inflammasome, which plays a crucial role in innate immunity and inflammation. In response to pathogens and other damage-associated signals, recruited to the NLRP1 inflammasome in its precursor form following the recruitment of caspase caspa. Its subsequent activation causes the cleavage of the midformed pro-il1b and results in il1b maturation and secretion in the extracellular milieu. Activated by direct binding to bacterial lipopolysaccharides (LPS), which causes non-canonical inflammasome activation and results in the pyroptosis of infected cells and their extrusion into the gut lumen, as well as in cytokine secretion. Plays a crucial role in the restriction of bacterial infection to intestinal sites. Pyroptosis limits bacterial replication, while cytokine secretion promotes the recruitment and activation of immune cells and triggers mucosal inflammation. Promotes pyroptosis by bacterial infection by E.piscicida. The sequence is that of Caspase b from Danio rerio (Zebrafish).